The chain runs to 697 residues: Elongation factor G (697 aa).

One can recognise a tr-type G domain in the interval 8-283; the sequence is ERMRNIGIAA…AVVDYLPSPL (276 aa). GTP is bound by residues 17-24, 81-85, and 135-138; these read AHIDAGKT, DTPGH, and NKMD.

This sequence belongs to the TRAFAC class translation factor GTPase superfamily. Classic translation factor GTPase family. EF-G/EF-2 subfamily.

It is found in the cytoplasm. In terms of biological role, catalyzes the GTP-dependent ribosomal translocation step during translation elongation. During this step, the ribosome changes from the pre-translocational (PRE) to the post-translocational (POST) state as the newly formed A-site-bound peptidyl-tRNA and P-site-bound deacylated tRNA move to the P and E sites, respectively. Catalyzes the coordinated movement of the two tRNA molecules, the mRNA and conformational changes in the ribosome. This chain is Elongation factor G, found in Solibacter usitatus (strain Ellin6076).